The following is a 598-amino-acid chain: Probable transporter mch1 (598 aa).

The tract at residues 1-49 (MASPTPAPRPDQISASTPLLQSDSTSSCASSIRSLSPSRRRHRNGRTSP) is disordered. The segment covering 22 to 37 (SDSTSSCASSIRSLSP) has biased composition (low complexity). Asn-57 carries N-linked (GlcNAc...) asparagine glycosylation. Helical transmembrane passes span 63 to 83 (ALLS…GHIF), 96 to 116 (GLSS…GYMC), 122 to 142 (GPLS…AAGV), 164 to 184 (LAYA…CSMY), 202 to 222 (GLAL…QSQL), and 241 to 261 (VFHF…LGTF). The interval 315 to 334 (AGILDPSKPDNDSDSEEEDD) is disordered. Asn-325 is a glycosylation site (N-linked (GlcNAc...) asparagine). Transmembrane regions (helical) follow at residues 355–375 (HTMW…EAFI), 405–425 (IVGI…DLLA), 453–473 (FLLF…SGWI), 486–506 (LVGA…TVIW), 516–536 (GIVA…YSAV), and 565–585 (SAFW…LWAW).

Belongs to the major facilitator superfamily.

It localises to the vacuole membrane. Its function is as follows. Probable transporter. The sequence is that of Probable transporter mch1 (mch1) from Neurospora crassa (strain ATCC 24698 / 74-OR23-1A / CBS 708.71 / DSM 1257 / FGSC 987).